Reading from the N-terminus, the 414-residue chain is tRNA dimethylallyltransferase (414 aa).

33–40 (APTASGKT) is a binding site for ATP. 35-40 (TASGKT) is a binding site for substrate. Interaction with substrate tRNA stretches follow at residues 58 to 61 (DSAL), 182 to 186 (QRITR), and 266 to 271 (RCVGYR).

Belongs to the IPP transferase family. Monomer. It depends on Mg(2+) as a cofactor.

It carries out the reaction adenosine(37) in tRNA + dimethylallyl diphosphate = N(6)-dimethylallyladenosine(37) in tRNA + diphosphate. In terms of biological role, catalyzes the transfer of a dimethylallyl group onto the adenine at position 37 in tRNAs that read codons beginning with uridine, leading to the formation of N6-(dimethylallyl)adenosine (i(6)A). In Psychrobacter arcticus (strain DSM 17307 / VKM B-2377 / 273-4), this protein is tRNA dimethylallyltransferase.